Here is a 489-residue protein sequence, read N- to C-terminus: Betaine aldehyde dehydrogenase (489 aa).

K(+)-binding residues include threonine 26 and aspartate 93. NAD(+) is bound at residue 150 to 152 (GAW). Catalysis depends on lysine 162, which acts as the Charge relay system. 176 to 179 (KPSE) serves as a coordination point for NAD(+). A K(+)-binding site is contributed by valine 180. 229–232 (GVET) is a binding site for NAD(+). K(+) is bound at residue leucine 245. The Proton acceptor role is filled by glutamate 251. NAD(+) is bound by residues glycine 253, cysteine 285, and glutamate 386. Cysteine 285 functions as the Nucleophile in the catalytic mechanism. Cysteine sulfenic acid (-SOH) is present on cysteine 285. K(+) contacts are provided by lysine 456 and glycine 459. Glutamate 463 (charge relay system) is an active-site residue.

This sequence belongs to the aldehyde dehydrogenase family. Dimer of dimers. K(+) is required as a cofactor.

It carries out the reaction betaine aldehyde + NAD(+) + H2O = glycine betaine + NADH + 2 H(+). It participates in amine and polyamine biosynthesis; betaine biosynthesis via choline pathway; betaine from betaine aldehyde: step 1/1. Involved in the biosynthesis of the osmoprotectant glycine betaine. Catalyzes the irreversible oxidation of betaine aldehyde to the corresponding acid. The protein is Betaine aldehyde dehydrogenase of Burkholderia pseudomallei (strain K96243).